A 130-amino-acid chain; its full sequence is Albumin-1 C (130 aa).

A signal peptide spans 1–26 (MASVKLASLIVLFATLGMFLTKNVGA). Disulfide bonds link Cys-29–Cys-46, Cys-33–Cys-48, and Cys-41–Cys-58. 2 propeptides span residues 64–69 (VFLRTN) and 123–130 (LLKSVSTA).

In terms of processing, the C-terminal glycine may be removed from PA1b. Major component of both the cotyledons and embryonic axes of mature seeds.

Functionally, PA1b binds to basic 7S globulin (BG) and stimulates its phosphorylation activity. Involved in the signal transduction system to regulate the growth and differentiation as a hormone peptide. Toxic to various insects through binding to a high affinity binding site in the insect gut. The chain is Albumin-1 C from Pisum sativum (Garden pea).